The primary structure comprises 421 residues: Alpha-1-antitrypsin (421 aa).

The N-terminal stretch at 1-24 is a signal peptide; it reads MASSSTWGLLLLAGLCCLVPISLA. Residues Asn73 and Asn110 are each glycosylated (N-linked (GlcNAc...) asparagine). The segment at 376-395 is RCL; the sequence is GATILEAIPMSIPPNVKFNK. Ser386 is subject to Phosphoserine.

This sequence belongs to the serpin family. In terms of assembly, interacts with CELA2A. Interacts with ERGIC3 and LMAN1/ERGIC53. Interacts with PRSS1/Trypsin.

The protein localises to the secreted. In terms of biological role, inhibitor of serine proteases. Its primary target is elastase, but it also has a moderate affinity for plasmin and thrombin. The chain is Alpha-1-antitrypsin (SERPINA1) from Sus scrofa (Pig).